The chain runs to 232 residues: Putative homeobox protein NANOG2 (232 aa).

The interval 1–39 (MDLPIQDSHDSSTSPKGKQPTTAEKSATKKEDKVPVKKQ) is disordered. Residues 11-25 (SSTSPKGKQPTTAEK) show a composition bias toward polar residues. A compositionally biased stretch (basic and acidic residues) spans 26–35 (SATKKEDKVP). Repeat copies occupy residues 123–127 (WSNQT), 128–132 (WNNST), 133–137 (WSNQT), 143–147 (WSNHS), 148–152 (WNTQT), 153–157 (WCTQS), 158–162 (WNNQA), and 163–167 (WNSPF). The segment at 123 to 167 (WSNQTWNNSTWSNQTQNIQSWSNHSWNTQTWCTQSWNNQAWNSPF) is 8 X repeats starting with a Trp in each unit. Positions 123–167 (WSNQTWNNSTWSNQTQNIQSWSNHSWNTQTWCTQSWNNQAWNSPF) are sufficient for transactivation activity. The sufficient for strong transactivation activity stretch occupies residues 168–232 (YNCGEESLQS…YSTNMXXEDV (65 aa)).

This sequence belongs to the Nanog homeobox family.

Its subcellular location is the nucleus. Probable transcriptional regulator. The sequence is that of Putative homeobox protein NANOG2 (NANOGP1) from Pan paniscus (Pygmy chimpanzee).